The primary structure comprises 419 residues: MPSRKADLIVGIQWGDEGKGKIVDRLAKEYDMVCRSQGGHNAGHTIWVDGVRYALHLIPSGILNPKAVNVIGNGVVLSPESIIKEMLQFENLEGRLFISDKAHLNLSYHSLIDQAREKLKGDKAIGTTGKGIGPAYSDKINRVGMRVGELLNPEKLCERIVEHFEQNRDIFAILNINMPNKNELLEELKGYSEKLSPFITDTTQLIWRALDKENKRVLLEGAQGTMLDIDHGTYPYVTSSSTISAGACTGLGINAKDIGKVIGIVKAYCTRVGNGPFPSEDLGKDGKLLGERGHEFGTTTGRARRCGWFDAVACRYASRLNGCDELALMKLDVLDGFDEVKVCVAYELNGAQIDYLPANLDDVKPIYKSFKGWDKTEGARRFEDLPKEAQDYIKIIEEITKTKVGIISTSPEREDTIIL.

Residues 15–21 (GDEGKGK) and 43–45 (GHT) contribute to the GTP site. D16 (proton acceptor) is an active-site residue. 2 residues coordinate Mg(2+): D16 and G43. Residues 16–19 (DEGK), 41–44 (NAGH), T128, R142, Q223, T238, and R302 each bind IMP. H44 functions as the Proton donor in the catalytic mechanism. 298–304 (TTTGRAR) provides a ligand contact to substrate. GTP contacts are provided by residues R304, 330-332 (KLD), and 408-410 (STS).

Belongs to the adenylosuccinate synthetase family. In terms of assembly, homodimer. It depends on Mg(2+) as a cofactor.

It localises to the cytoplasm. The catalysed reaction is IMP + L-aspartate + GTP = N(6)-(1,2-dicarboxyethyl)-AMP + GDP + phosphate + 2 H(+). The protein operates within purine metabolism; AMP biosynthesis via de novo pathway; AMP from IMP: step 1/2. Plays an important role in the de novo pathway of purine nucleotide biosynthesis. Catalyzes the first committed step in the biosynthesis of AMP from IMP. The sequence is that of Adenylosuccinate synthetase from Sulfurimonas denitrificans (strain ATCC 33889 / DSM 1251) (Thiomicrospira denitrificans (strain ATCC 33889 / DSM 1251)).